We begin with the raw amino-acid sequence, 382 residues long: Prostaglandin D2 receptor 2 (382 aa).

Residues 1 to 32 (MANVTLKPLCPLLEEMVQLPNHSNSSLRYIDH) lie on the Extracellular side of the membrane. N-linked (GlcNAc...) asparagine glycosylation is found at Asn-3, Asn-21, and Asn-24. The helical transmembrane segment at 33–55 (VSVLLHGLASLLGLVENGLILFV) threads the bilayer. The Cytoplasmic portion of the chain corresponds to 56–66 (VGCRMRQTVVT). The helical transmembrane segment at 67–88 (TWVLHLALSDLLAAASLPFFTY) threads the bilayer. Residues 89-105 (FLAVGHSWELGTTFCKL) lie on the Extracellular side of the membrane. Cys-103 and Cys-181 are joined by a disulfide. Residues 106–126 (HSSVFFLNMFASGFLLSAISL) traverse the membrane as a helical segment. Residues 127 to 145 (DRCLQVVRPVWAQNHRTVA) are Cytoplasmic-facing. Residues 146 to 167 (VAHRVCLMLWALAVLNTIPYFV) traverse the membrane as a helical segment. Residues 168-209 (FRDTIPRLDGRIMCYYNLLLWNPGPDRDTTCDYRQKALAVSK) are Extracellular-facing. A helical transmembrane segment spans residues 210-230 (FLLAFMVPLAIIASSHVAVSL). Topologically, residues 231 to 246 (RLHHRGRQRTGRFVRL) are cytoplasmic. The helical transmembrane segment at 247 to 268 (VAAIVVAFVLCWGPYHIFSLLE) threads the bilayer. The Extracellular portion of the chain corresponds to 269–287 (ARAHSVTTLRQLASRGLPF). Residues 288–307 (VTSLAFFNSVVNPLLYVFTC) form a helical membrane-spanning segment. The Cytoplasmic portion of the chain corresponds to 308–357 (PDMLYKLRRSLRAVLESVLVEDSDQSGGLRNRRRRASSTATPASTLLLAD). Residues 329 to 332 (DSDQ) carry the Involved in the recycling of CRTH2 motif. Ser-330 and Ser-344 each carry phosphoserine.

The protein belongs to the G-protein coupled receptor 1 family. Phosphorylated.

Its subcellular location is the cell membrane. Its function is as follows. Receptor for prostaglandin D2 (PGD2). Coupled to the G(i)-protein. Receptor activation may result in pertussis toxin-sensitive decreases in cAMP levels and Ca(2+) mobilization. PI3K signaling is also implicated in mediating PTGDR2 effects. PGD2 induced receptor internalization. CRTH2 internalization can be regulated by diverse kinases such as, PKC, PKA, GRK2, GPRK5/GRK5 and GRK6. Receptor activation is responsible, at least in part, in immune regulation and allergic/inflammation responses. The chain is Prostaglandin D2 receptor 2 (Ptgdr2) from Mus musculus (Mouse).